Consider the following 309-residue polypeptide: Homoserine O-succinyltransferase (309 aa).

Cys-142 serves as the catalytic Acyl-thioester intermediate. Lys-163 and Ser-192 together coordinate substrate. His-235 functions as the Proton acceptor in the catalytic mechanism. The active site involves Glu-237. A substrate-binding site is contributed by Arg-249.

Belongs to the MetA family. As to quaternary structure, homodimer.

The protein resides in the cytoplasm. The enzyme catalyses L-homoserine + succinyl-CoA = O-succinyl-L-homoserine + CoA. Its pathway is amino-acid biosynthesis; L-methionine biosynthesis via de novo pathway; O-succinyl-L-homoserine from L-homoserine: step 1/1. Transfers a succinyl group from succinyl-CoA to L-homoserine, forming succinyl-L-homoserine. In Escherichia coli O157:H7, this protein is Homoserine O-succinyltransferase.